A 406-amino-acid polypeptide reads, in one-letter code: MASTYDTLTPEAQKGEVEIQNYTINFGPQHPAAHGVLRMVMELDGEIVERVDPHVGLLHRGTEKLIEYKTYLQALPYFDRLDYCSPLGMEHSYVLAIEKLLQLEVPLRAQYLRVLFAELTRICNHMLNIGSHVMDVGAMTPNLWLFEIREDCLNFFERASGARMHAAWFRPGGVHQDVPLKLLTDIGDWLDTRLPRLFEDAVSLFADNRIFKQRNVDVGVVSKEDALAWGFSGPMIRAAGIPWDIRKSQPYDVYDRMDFEIPVGTKGDCYDRVMVRIEEVRQSARIMKQCLSEMPEGPIASLDRKVVPPKRGEMKRSMEALIHHFKLYTEGFHVPAGDVYVATESPKGEFGVYLVSDGSNKPYRCKIRPTAFSHLQAMDFMMKGHMLADTTAILSAIDVVFGECDR.

It belongs to the complex I 49 kDa subunit family. As to quaternary structure, NDH-1 is composed of 14 different subunits. Subunits NuoB, C, D, E, F, and G constitute the peripheral sector of the complex.

Its subcellular location is the cell inner membrane. The catalysed reaction is a quinone + NADH + 5 H(+)(in) = a quinol + NAD(+) + 4 H(+)(out). NDH-1 shuttles electrons from NADH, via FMN and iron-sulfur (Fe-S) centers, to quinones in the respiratory chain. The immediate electron acceptor for the enzyme in this species is believed to be ubiquinone. Couples the redox reaction to proton translocation (for every two electrons transferred, four hydrogen ions are translocated across the cytoplasmic membrane), and thus conserves the redox energy in a proton gradient. This is NADH-quinone oxidoreductase subunit D from Rhizorhabdus wittichii (strain DSM 6014 / CCUG 31198 / JCM 15750 / NBRC 105917 / EY 4224 / RW1) (Sphingomonas wittichii).